We begin with the raw amino-acid sequence, 1697 residues long: Histone acetyltransferase HAC1 (1697 aa).

The span at 1–16 (MNVQAHMSGQVSNQGT) shows a compositional bias: polar residues. 6 disordered regions span residues 1-45 (MNVQ…LGPS), 202-221 (SNFG…QRNT), 385-439 (SFQA…QQQR), 555-574 (HWQS…SNER), 583-631 (RMSG…GNRD), and 843-901 (IGIA…GKPE). 2 stretches are compositionally biased toward low complexity: residues 17 to 28 (MSQQNGNSQMQN) and 202 to 217 (SNFG…SMSS). A compositionally biased stretch (polar residues) spans 385–398 (SFQAVSRTSSSLSH). The segment covering 399–439 (QQQQFQQQPNRFQQQPNQFHQQQQQFLHQQQLKQQSQQQQR) has biased composition (low complexity). Polar residues-rich tracts occupy residues 556-571 (WQSQ…NSMS) and 584-628 (MSGT…NGNG). A TAZ-type 1 zinc finger spans residues 629–709 (NRDPRFKNQQ…EPNCPVCIPV (81 aa)). Positions 873-901 (TKVEKEPESLKKENLAESTEHTSKSGKPE) are enriched in basic and acidic residues. The PHD-type zinc-finger motif lies at 989 to 1066 (HYFCIPCYNE…EYTCPYCFIA (78 aa)). The CBP/p300-type HAT domain occupies 1081-1517 (VLGAKDLPRT…VLYHLHNPTA (437 aa)). Acetyl-CoA contacts are provided by residues 1204-1206 (LDS), 1223-1224 (RT), and Trp-1279. ZZ-type zinc fingers lie at residues 1399–1462 (HLQP…IMDI) and 1519–1572 (AFVT…SLAD). Zn(2+) is bound by residues Cys-1404, Cys-1407, Cys-1419, Cys-1422, Cys-1428, Cys-1431, His-1444, His-1452, Cys-1524, Cys-1527, Cys-1539, Cys-1542, Cys-1548, Cys-1551, His-1560, and His-1562. Residues 1579-1662 (EARQLRVLQL…ECHVPRCRDL (84 aa)) form a TAZ-type 2 zinc finger.

As to expression, rosette leaves, stems and flowers.

It is found in the nucleus. The enzyme catalyses L-lysyl-[protein] + acetyl-CoA = N(6)-acetyl-L-lysyl-[protein] + CoA + H(+). Acetyltransferase enzyme. Acetylates histones, giving a specific tag for transcriptional activation. This is Histone acetyltransferase HAC1 (HAC1) from Arabidopsis thaliana (Mouse-ear cress).